We begin with the raw amino-acid sequence, 396 residues long: Ornithine aminotransferase (396 aa).

An N6-(pyridoxal phosphate)lysine modification is found at Lys-255.

The protein belongs to the class-III pyridoxal-phosphate-dependent aminotransferase family. OAT subfamily. Pyridoxal 5'-phosphate serves as cofactor.

The protein resides in the cytoplasm. It catalyses the reaction a 2-oxocarboxylate + L-ornithine = L-glutamate 5-semialdehyde + an L-alpha-amino acid. It functions in the pathway amino-acid biosynthesis; L-proline biosynthesis; L-glutamate 5-semialdehyde from L-ornithine: step 1/1. In terms of biological role, catalyzes the interconversion of ornithine to glutamate semialdehyde. The sequence is that of Ornithine aminotransferase from Bacillus cereus (strain Q1).